We begin with the raw amino-acid sequence, 317 residues long: MSADVPVTVAAVRAVARDVLALELRHANGQPLPGASAGAHIDLALPNGLVRQYSLVNATGQATMDCYQVAVGWDANSRGGSVWIHEKLKVGQALRVTHRATCSEMAPEHRRVLLLAGGIGVTPIYAMAQACAQQGVDVELWASARSAPRLAYLEELKALLGQRLHLHADDEQGGPMNLTERLATQRWDAVYACGPAPMLDALTAATAHWAPGSVRMERFKGAEQPASERQPFELVLQRAGLSTTVDAHESVLDAMERVGVDFPWSCREGICGTCEAPVLEGEVQHLDYVLSPEERAEQRRMMVCVSRCGGGRLVLDI.

Positions 2–108 (SADVPVTVAA…RATCSEMAPE (107 aa)) constitute an FAD-binding FR-type domain. 110–220 (RRVLLLAGGI…PGSVRMERFK (111 aa)) is a binding site for NAD(+). The 2Fe-2S ferredoxin-type domain maps to 230–317 (QPFELVLQRA…CGGGRLVLDI (88 aa)). 4 residues coordinate [2Fe-2S] cluster: Cys-266, Cys-271, Cys-274, and Cys-304.

As to quaternary structure, monomer. Part of the p-toluenesulfonate methyl-monooxygenase complex TsaBM, comprising the reductase TsaB and the oxygenase TsaM. The cofactor is FMN.

Iron-sulfur flavoprotein carrying electrons from NADH to the oxygenase TsaM. Involved in the toluene-4-sulfonate degradation pathway. This is Toluene-4-sulfonate monooxygenase system reductase subunit TsaB1 (tsaB1) from Comamonas testosteroni (Pseudomonas testosteroni).